We begin with the raw amino-acid sequence, 151 residues long: Deoxyuridine 5'-triphosphate nucleotidohydrolase (151 aa).

Substrate-binding positions include 70-72 (RSG), Asn-83, 87-89 (LID), and Lys-97.

It belongs to the dUTPase family. Mg(2+) serves as cofactor.

It catalyses the reaction dUTP + H2O = dUMP + diphosphate + H(+). It participates in pyrimidine metabolism; dUMP biosynthesis; dUMP from dCTP (dUTP route): step 2/2. Its function is as follows. This enzyme is involved in nucleotide metabolism: it produces dUMP, the immediate precursor of thymidine nucleotides and it decreases the intracellular concentration of dUTP so that uracil cannot be incorporated into DNA. This is Deoxyuridine 5'-triphosphate nucleotidohydrolase from Idiomarina loihiensis (strain ATCC BAA-735 / DSM 15497 / L2-TR).